The primary structure comprises 174 residues: uncharacterized protein (174 aa).

The protein belongs to the mimivirus L39/R874 family.

This is an uncharacterized protein from Acanthamoeba polyphaga (Amoeba).